The following is a 130-amino-acid chain: S-adenosylmethionine decarboxylase proenzyme (130 aa).

Catalysis depends on S66, which acts as the Schiff-base intermediate with substrate; via pyruvic acid. A Pyruvic acid (Ser); by autocatalysis modification is found at S66. H71 (proton acceptor; for processing activity) is an active-site residue. C86 acts as the Proton donor; for catalytic activity in catalysis.

Belongs to the prokaryotic AdoMetDC family. Type 1 subfamily. Heterotetramer of two alpha and two beta chains arranged as a dimer of alpha/beta heterodimers. It depends on pyruvate as a cofactor. In terms of processing, is synthesized initially as an inactive proenzyme. Formation of the active enzyme involves a self-maturation process in which the active site pyruvoyl group is generated from an internal serine residue via an autocatalytic post-translational modification. Two non-identical subunits are generated from the proenzyme in this reaction, and the pyruvate is formed at the N-terminus of the alpha chain, which is derived from the carboxyl end of the proenzyme. The post-translation cleavage follows an unusual pathway, termed non-hydrolytic serinolysis, in which the side chain hydroxyl group of the serine supplies its oxygen atom to form the C-terminus of the beta chain, while the remainder of the serine residue undergoes an oxidative deamination to produce ammonia and the pyruvoyl group blocking the N-terminus of the alpha chain.

The catalysed reaction is S-adenosyl-L-methionine + H(+) = S-adenosyl 3-(methylsulfanyl)propylamine + CO2. It functions in the pathway amine and polyamine biosynthesis; S-adenosylmethioninamine biosynthesis; S-adenosylmethioninamine from S-adenosyl-L-methionine: step 1/1. Functionally, catalyzes the decarboxylation of S-adenosylmethionine to S-adenosylmethioninamine (dcAdoMet), the propylamine donor required for the synthesis of the polyamines spermine and spermidine from the diamine putrescine. The chain is S-adenosylmethionine decarboxylase proenzyme from Bacillus cereus (strain ATCC 10987 / NRS 248).